The following is a 47-amino-acid chain: Rhodotorucin-A peptides type 3 (47 aa).

Positions 1 to 3 are excised as a propeptide; the sequence is MVA. C14 carries the S-farnesyl cysteine lipid modification. The propeptide occupies 15–18; sequence TVAK. C29 carries S-farnesyl cysteine lipidation. Positions 30–33 are excised as a propeptide; sequence TVSK. C44 carries S-farnesyl cysteine lipidation. A propeptide spanning residues 45–47 is cleaved from the precursor; sequence TVA.

The protein resides in the cell membrane. Functionally, rhodotorucin-A is a mating pheromone in cells of mating type A of Rhodosporidium toruloides. This is Rhodotorucin-A peptides type 3 (RHA3) from Rhodotorula toruloides (Yeast).